The chain runs to 35 residues: Photosystem II reaction center protein T (35 aa).

A helical transmembrane segment spans residues 3 to 23 (ALVYTFLLVGTLGIIFFAIFF).

Belongs to the PsbT family. PSII is composed of 1 copy each of membrane proteins PsbA, PsbB, PsbC, PsbD, PsbE, PsbF, PsbH, PsbI, PsbJ, PsbK, PsbL, PsbM, PsbT, PsbY, PsbZ, Psb30/Ycf12, at least 3 peripheral proteins of the oxygen-evolving complex and a large number of cofactors. It forms dimeric complexes.

The protein resides in the plastid. It is found in the chloroplast thylakoid membrane. Found at the monomer-monomer interface of the photosystem II (PS II) dimer, plays a role in assembly and dimerization of PSII. PSII is a light-driven water plastoquinone oxidoreductase, using light energy to abstract electrons from H(2)O, generating a proton gradient subsequently used for ATP formation. In Zygnema circumcarinatum (Green alga), this protein is Photosystem II reaction center protein T.